Consider the following 1295-residue polypeptide: Phosphoribosylformylglycinamidine synthase (1295 aa).

The disordered stretch occupies residues 302-327 (APFSGAATGSGGEIRDEGATGRGSKP). ATP is bound by residues 306–317 (GAATGSGGEIRD) and A677. The Mg(2+) site is built by D678, E717, N721, and D884. S886 lines the ATP pocket. A Glutamine amidotransferase type-1 domain is found at 1042-1295 (MAILREQGVN…MFRNARVYLG (254 aa)). C1135 (nucleophile) is an active-site residue. Active-site residues include H1260 and E1262.

This sequence in the N-terminal section; belongs to the FGAMS family. Monomer.

It is found in the cytoplasm. It catalyses the reaction N(2)-formyl-N(1)-(5-phospho-beta-D-ribosyl)glycinamide + L-glutamine + ATP + H2O = 2-formamido-N(1)-(5-O-phospho-beta-D-ribosyl)acetamidine + L-glutamate + ADP + phosphate + H(+). It participates in purine metabolism; IMP biosynthesis via de novo pathway; 5-amino-1-(5-phospho-D-ribosyl)imidazole from N(2)-formyl-N(1)-(5-phospho-D-ribosyl)glycinamide: step 1/2. Its function is as follows. Phosphoribosylformylglycinamidine synthase involved in the purines biosynthetic pathway. Catalyzes the ATP-dependent conversion of formylglycinamide ribonucleotide (FGAR) and glutamine to yield formylglycinamidine ribonucleotide (FGAM) and glutamate. The sequence is that of Phosphoribosylformylglycinamidine synthase from Pseudoalteromonas atlantica (strain T6c / ATCC BAA-1087).